The sequence spans 273 residues: Formamidopyrimidine-DNA glycosylase (273 aa).

The active-site Schiff-base intermediate with DNA is the proline 2. The active-site Proton donor is the glutamate 3. The active-site Proton donor; for beta-elimination activity is the lysine 58. Positions 92, 111, and 153 each coordinate DNA. The FPG-type zinc finger occupies 238-272 (KVYGREGQSCLSCSSTIIKIKHSGRSTFYCKTCQY). Residue arginine 262 is the Proton donor; for delta-elimination activity of the active site.

The protein belongs to the FPG family. Monomer. Zn(2+) serves as cofactor.

It carries out the reaction Hydrolysis of DNA containing ring-opened 7-methylguanine residues, releasing 2,6-diamino-4-hydroxy-5-(N-methyl)formamidopyrimidine.. It catalyses the reaction 2'-deoxyribonucleotide-(2'-deoxyribose 5'-phosphate)-2'-deoxyribonucleotide-DNA = a 3'-end 2'-deoxyribonucleotide-(2,3-dehydro-2,3-deoxyribose 5'-phosphate)-DNA + a 5'-end 5'-phospho-2'-deoxyribonucleoside-DNA + H(+). Functionally, involved in base excision repair of DNA damaged by oxidation or by mutagenic agents. Acts as a DNA glycosylase that recognizes and removes damaged bases. Has a preference for oxidized purines, such as 7,8-dihydro-8-oxoguanine (8-oxoG). Has AP (apurinic/apyrimidinic) lyase activity and introduces nicks in the DNA strand. Cleaves the DNA backbone by beta-delta elimination to generate a single-strand break at the site of the removed base with both 3'- and 5'-phosphates. This Rickettsia peacockii (strain Rustic) protein is Formamidopyrimidine-DNA glycosylase.